Reading from the N-terminus, the 85-residue chain is Large ribosomal subunit protein bL27 (85 aa).

The disordered stretch occupies residues 1-22 (MAHKKGQGSSRNGRDSPGQRRG).

Belongs to the bacterial ribosomal protein bL27 family.

This is Large ribosomal subunit protein bL27 from Anaeromyxobacter dehalogenans (strain 2CP-1 / ATCC BAA-258).